Here is a 349-residue protein sequence, read N- to C-terminus: Peroxidase 7 (349 aa).

A signal peptide spans 1 to 22 (MKLAVVSVVVILGVLVAWPVSA). Cystine bridges form between Cys60-Cys136, Cys93-Cys98, Cys142-Cys341, and Cys220-Cys252. The Proton acceptor role is filled by His91. Residues Asp92, Val95, Gly97, Asp99, and Ser101 each contribute to the Ca(2+) site. Position 183 (Pro183) interacts with substrate. His213 contacts heme b. Thr214 contacts Ca(2+). Residue Asn231 is glycosylated (N-linked (GlcNAc...) asparagine). The Ca(2+) site is built by Asp262, Thr265, and Asp270.

This sequence belongs to the peroxidase family. Classical plant (class III) peroxidase subfamily. Requires heme b as cofactor. The cofactor is Ca(2+).

The protein localises to the secreted. It catalyses the reaction 2 a phenolic donor + H2O2 = 2 a phenolic radical donor + 2 H2O. Removal of H(2)O(2), oxidation of toxic reductants, biosynthesis and degradation of lignin, suberization, auxin catabolism, response to environmental stresses such as wounding, pathogen attack and oxidative stress. These functions might be dependent on each isozyme/isoform in each plant tissue. This is Peroxidase 7 (PER7) from Arabidopsis thaliana (Mouse-ear cress).